A 48-amino-acid chain; its full sequence is uncharacterized protein (48 aa).

This is an uncharacterized protein from Dictyostelium discoideum (Social amoeba).